The following is a 245-amino-acid chain: DNA terminal protein (245 aa).

The Nuclear localization signal motif lies at 4 to 55 (KRLKKKLETKRKKSLLVSEGYSKKETKKLKGRELETVYKKKAHNRKNRERAR). O-(5'-phospho-DNA)-tyrosine is present on tyrosine 194.

In terms of assembly, interacts with the DNA-binding protein P1.

It is found in the virion. Functionally, acts as a primer for viral genomic replication. DNA terminal protein is covalently linked to the 5'-ends of both strands of the genome through a phosphodiester bond between the beta-hydroxyl group of a tyrosine residue and the 5'-phosphate of the terminal deoxythymidylate. This protein is essential for DNA replication and is involved in the priming of DNA elongation. The chain is DNA terminal protein from Bacillus thuringiensis (Bacillus thuringiensis bacteriophage Bam35c).